The sequence spans 133 residues: Lymphocyte antigen 6 complex locus protein G6d (133 aa).

An N-terminal signal peptide occupies residues 1–19 (MKPQFVGILLSSLLGAALG). Positions 22–116 (MRCYNCGGSP…ASHVAPAGIL (95 aa)) constitute a UPAR/Ly6 domain. Cys-27 and Cys-35 are joined by a disulfide. O-linked (GalNAc...) threonine glycans are attached at residues Thr-40 and Thr-41. Cystine bridges form between Cys-42–Cys-71 and Cys-77–Cys-96. A lipid anchor (GPI-anchor amidated serine) is attached at Ser-104. Residues 105 to 133 (AVASHVAPAGILAAAATALTCLLPGLWSG) constitute a propeptide, removed in mature form.

Homodimer. Post-translationally, O-glycosylated. Expressed in the adult lung, and in fetal liver, lung, kidney, brain and spleen.

It is found in the cell membrane. It localises to the cell projection. The protein resides in the filopodium. This is Lymphocyte antigen 6 complex locus protein G6d (LY6G6D) from Homo sapiens (Human).